The chain runs to 257 residues: MEAYLVEMYHGVPYTAAVQLNLVEKHSANISLTVWIPMFQTSLPKNSVMDLLHDVTVICTQISTVHGPMIKVDLSSSNAGLATMPRQFLINAIIALDDWGNMDYEVPVAFDKKSFCVTILKPKNMLYTVPSITPTNRPTHELIAVCSFHNRVTLKSFNIPVFIRALYIRQQGLDSVEQAISSDVDHAITTARVAPYAGLTLVINITSTKGAFKLLKAGSQILAELGPYLTQVSLHDVIMNWKHTGTSYILKSSSTSG.

The short motif at Val193–Ile205 is the Nuclear export signal element.

It belongs to the pneumovirinae M protein family. In terms of assembly, forms dimers. Forms higher-order oligomers. Interacts with glycoprotein G (via N-terminus). Interacts with protein M2-1; this interaction directs the matrix protein localization to cytoplasmic inclusions comprising viral proteins L, N, P, and M2-1 and mediates the matrix protein association with the nucleocapsid.

Its subcellular location is the virion. The protein localises to the host cytoplasm. The protein resides in the host nucleus. It localises to the host cell membrane. In terms of biological role, plays a crucial role in virus assembly into filaments and budding. Early in infection, localizes in the nucleus where it may inhibit host cell transcription. Later in infection, traffics to the cytoplasm to associate with inclusion bodies, the site of viral transcription and replication. During virus assembly and budding, acts as a bridge between the nucleocapsid and the lipid bilayer. The sequence is that of Matrix protein (M) from Murine pneumonia virus (strain 15) (MPV).